Reading from the N-terminus, the 191-residue chain is 3-isopropylmalate dehydratase small subunit (191 aa).

Belongs to the LeuD family. LeuD type 1 subfamily. In terms of assembly, heterodimer of LeuC and LeuD.

It catalyses the reaction (2R,3S)-3-isopropylmalate = (2S)-2-isopropylmalate. Its pathway is amino-acid biosynthesis; L-leucine biosynthesis; L-leucine from 3-methyl-2-oxobutanoate: step 2/4. Functionally, catalyzes the isomerization between 2-isopropylmalate and 3-isopropylmalate, via the formation of 2-isopropylmaleate. This is 3-isopropylmalate dehydratase small subunit from Solibacter usitatus (strain Ellin6076).